Reading from the N-terminus, the 216-residue chain is Phosphatidylserine decarboxylase proenzyme (216 aa).

Ser183 functions as the Schiff-base intermediate with substrate; via pyruvic acid in the catalytic mechanism. At Ser183 the chain carries Pyruvic acid (Ser); by autocatalysis.

This sequence belongs to the phosphatidylserine decarboxylase family. PSD-A subfamily. In terms of assembly, heterodimer of a large membrane-associated beta subunit and a small pyruvoyl-containing alpha subunit. Pyruvate serves as cofactor. In terms of processing, is synthesized initially as an inactive proenzyme. Formation of the active enzyme involves a self-maturation process in which the active site pyruvoyl group is generated from an internal serine residue via an autocatalytic post-translational modification. Two non-identical subunits are generated from the proenzyme in this reaction, and the pyruvate is formed at the N-terminus of the alpha chain, which is derived from the carboxyl end of the proenzyme. The post-translation cleavage follows an unusual pathway, termed non-hydrolytic serinolysis, in which the side chain hydroxyl group of the serine supplies its oxygen atom to form the C-terminus of the beta chain, while the remainder of the serine residue undergoes an oxidative deamination to produce ammonia and the pyruvoyl prosthetic group on the alpha chain.

The protein resides in the cell membrane. The catalysed reaction is a 1,2-diacyl-sn-glycero-3-phospho-L-serine + H(+) = a 1,2-diacyl-sn-glycero-3-phosphoethanolamine + CO2. The protein operates within phospholipid metabolism; phosphatidylethanolamine biosynthesis; phosphatidylethanolamine from CDP-diacylglycerol: step 2/2. Functionally, catalyzes the formation of phosphatidylethanolamine (PtdEtn) from phosphatidylserine (PtdSer). The sequence is that of Phosphatidylserine decarboxylase proenzyme from Cupriavidus taiwanensis (strain DSM 17343 / BCRC 17206 / CCUG 44338 / CIP 107171 / LMG 19424 / R1) (Ralstonia taiwanensis (strain LMG 19424)).